The following is a 359-amino-acid chain: MKPSIYSLTRDELIAWAVERGQKQFRATQIWDWLYKKRVQSFEEMTNISKDFVSILNDSFCVNPLKQRVVQESADGTVKYLFELPDGMLIETVLMRQHYGHSVCVTTQVGCNIGCTFCASGLIKKQRDLNSGEITAQIMLVQKYFDDRKQGERVSHVVVMGIGEPFDNYKNVMCFLRVINDDNGLAIGARHITVSTSGLAHKIRDFANEGVQVNLAVSLHAPNNDLRSSIMRVNRSFPLEKLFSAIEYYIEKTNRRVTFEYIMLNEVNDSIKQAQELADLTKTIRKLSYVNLIPYNPVSEHDQYSRSPKERVLAFYDVLKKNGVNCVVRQEHGTDIDAACGQLRSKTMKKDREKVTATK.

Glu91 (proton acceptor) is an active-site residue. The region spanning 97–329 (QHYGHSVCVT…KKNGVNCVVR (233 aa)) is the Radical SAM core domain. A disulfide bond links Cys104 and Cys340. Residues Cys111, Cys115, and Cys118 each coordinate [4Fe-4S] cluster. S-adenosyl-L-methionine-binding positions include 163–164 (GE), Ser195, 218–220 (SLH), and Asn296. Cys340 functions as the S-methylcysteine intermediate in the catalytic mechanism.

Belongs to the radical SAM superfamily. RlmN family. The cofactor is [4Fe-4S] cluster.

It is found in the cytoplasm. The catalysed reaction is adenosine(2503) in 23S rRNA + 2 reduced [2Fe-2S]-[ferredoxin] + 2 S-adenosyl-L-methionine = 2-methyladenosine(2503) in 23S rRNA + 5'-deoxyadenosine + L-methionine + 2 oxidized [2Fe-2S]-[ferredoxin] + S-adenosyl-L-homocysteine. It catalyses the reaction adenosine(37) in tRNA + 2 reduced [2Fe-2S]-[ferredoxin] + 2 S-adenosyl-L-methionine = 2-methyladenosine(37) in tRNA + 5'-deoxyadenosine + L-methionine + 2 oxidized [2Fe-2S]-[ferredoxin] + S-adenosyl-L-homocysteine. Specifically methylates position 2 of adenine 2503 in 23S rRNA and position 2 of adenine 37 in tRNAs. The polypeptide is Probable dual-specificity RNA methyltransferase RlmN (Streptococcus pyogenes serotype M3 (strain ATCC BAA-595 / MGAS315)).